The chain runs to 460 residues: Malonyl-coenzyme A:anthocyanin 3-O-glucoside-6''-O-malonyltransferase (460 aa).

Active-site proton acceptor residues include H173 and D400.

The protein belongs to the plant acyltransferase family.

It catalyses the reaction an anthocyanidin 3-O-beta-D-glucoside + malonyl-CoA = an anthocyanidin 3-O-(6-O-malonyl-beta-D-glucoside) + CoA. Completely inhibited by 5 mM N-ethylmaleimide or 0.1 mM Cu(2+). Partially inhibited by 0.1 mM Fe(2+) or 0.1 mM Hg(2+). Catalyzes the transfer of the malonyl group from malonyl-CoA to pelargonidin 3-O-glucoside to produce pelargonidin 3-O-6''-O-malonylglucoside. Can also transfer the malonyl group from malonyl-CoA to cyanidin 3-O-glucoside, delphinidin 3-O-glucoside and quercetin 3-O-glucoside. This chain is Malonyl-coenzyme A:anthocyanin 3-O-glucoside-6''-O-malonyltransferase, found in Dahlia pinnata (Pinnate dahlia).